Consider the following 1551-residue polypeptide: Transient receptor potential cation channel subfamily M member-like 2 (1551 aa).

Residues 1 to 714 (MGKDSFTPLY…WMGTMAMNTR (714 aa)) lie on the Cytoplasmic side of the membrane. The stretch at 715–730 (WWKVLVCLYLPVLIFP) is an intramembrane region. Residues 731–837 (IIYFVPDEQH…DRIMHFYSAP (107 aa)) are Cytoplasmic-facing. Positions 744 to 767 (AAEREHQKSLNQKSSKVKSHKEKN) are disordered. Residues 838-858 (FSKFVGNVVGYLAFIFLYAYV) traverse the membrane as a helical segment. Residues 859-877 (VLFNFPRFDPAKTLGGIHP) lie on the Extracellular side of the membrane. A helical transmembrane segment spans residues 878–898 (TEIVLYFWVFTILIEEIRQLA). The Ca(2+) site is built by glutamate 893 and glutamine 896. Residues 899 to 916 (AKPPKYIKDKVSVYFSDT) are Cytoplasmic-facing. Residues 917–937 (WNFVDIFSLTVFIIAIILRFF) traverse the membrane as a helical segment. Positions 918 and 921 each coordinate Ca(2+). The Extracellular segment spans residues 938-947 (TNSRIFTASR). A helical membrane pass occupies residues 948–968 (IILSLDIIFFIVRSLQIFSVN). At 969 to 980 (RLLGPKLVMIQK) the chain is on the cytoplasmic side. Residues 981–1001 (MMQDLAQFIIILAVFTIAYGI) traverse the membrane as a helical segment. Over 1002–1018 (ALHAVMFPSPGIYARNN) the chain is Extracellular. Asparagine 1017 carries N-linked (GlcNAc...) asparagine glycosylation. An intramembrane region (pore-forming) is located at residues 1019–1034 (TWVTITSVVQYPYWQM). The short motif at 1035 to 1037 (YGE) is the Selectivity filter element. The Extracellular segment spans residues 1035–1059 (YGELFLDEIQGEKPKEFGEVDPDGR). A Prevents fast channel inactivation motif is present at residues 1040–1042 (LDE). Residues 1060-1080 (WLSPLLLAIYMVFTNILLLNL) form a helical membrane-spanning segment. The Cytoplasmic segment spans residues 1081–1116 (LIAIFNYTFERVQEDSDKVWKFQRYDLVQEYHSRPV). Residues 1117 to 1135 (FAPPLVLLGHILIFIRWVW) lie within the membrane without spanning it. At 1136-1551 (RMCRCGHPPR…KVAKMRDAAF (416 aa)) the chain is on the cytoplasmic side. The stretch at 1184-1209 (LEERVRALGDRVDCINSQLNRVLDSM) forms a coiled coil. The 153-residue stretch at 1394–1546 (WKRTSAGVML…VSILEKVAKM (153 aa)) folds into the Nudix hydrolase domain. A Nudix box motif is present at residues 1428 to 1449 (GMVEPGQLVTQALKAEFGEEAM).

Belongs to the transient receptor (TC 1.A.4) family. LTrpC subfamily. TRPM2 sub-subfamily. Homotetramer.

Its subcellular location is the cell membrane. Its activity is regulated as follows. Activated by phosphatidylinositol 4,5-bisphosphate (PIP2). Although PIP2 is essential for the channel activation, its contribution to the level of channel activity is minimal. Also activated by diphosphate ribose-2'-phosphate. Upon binding to ADPR, channel activation requires only a short initial cytosolic Ca(2+) increase, then the activation is sustained by the uptake of extracellular Ca(2+). Activated by 2-aminoethyl diphenylborinate (2-APB) in a Ca(2+)-dependent manner. 2-APB prevents the inactivation of the channel. Nonselective, voltage-independent cation channel that mediates Ca(2+) and to a lesser extent Na(+) influx, leading to increased cytoplasmic Ca(2+) levels. Functions as a ligand-gated ion channel. Binding of ADP-ribose causes a conformation change; the channel is primed but still requires Ca(2+) binding to trigger channel opening. May have ADP-ribose pyrophosphatase activity which reduces ADP-ribose levels induced by oxidative stress, thus preventing the channel activation by reactive oxygen species. The protein is Transient receptor potential cation channel subfamily M member-like 2 of Nematostella vectensis (Starlet sea anemone).